The sequence spans 382 residues: Mannitol-1-phosphate 5-dehydrogenase (382 aa).

4–15 (AVHFGAGNIGRG) lines the NAD(+) pocket.

Belongs to the mannitol dehydrogenase family.

It carries out the reaction D-mannitol 1-phosphate + NAD(+) = beta-D-fructose 6-phosphate + NADH + H(+). The sequence is that of Mannitol-1-phosphate 5-dehydrogenase from Vibrio vulnificus (strain YJ016).